A 426-amino-acid polypeptide reads, in one-letter code: Chaperone SurA (426 aa).

Positions 1 to 13 (MLGALFLGTAANA) are cleaved as a signal peptide. 2 consecutive PpiC domains span residues 164–265 (SEEL…KLLE) and 274–373 (RDEV…EVLG).

The protein resides in the periplasm. It catalyses the reaction [protein]-peptidylproline (omega=180) = [protein]-peptidylproline (omega=0). Functionally, chaperone involved in the correct folding and assembly of outer membrane proteins. Recognizes specific patterns of aromatic residues and the orientation of their side chains, which are found more frequently in integral outer membrane proteins. May act in both early periplasmic and late outer membrane-associated steps of protein maturation. In Pseudomonas fluorescens (strain Pf0-1), this protein is Chaperone SurA.